The chain runs to 257 residues: Acetylglutamate kinase (257 aa).

Substrate is bound by residues 40–41, arginine 62, and asparagine 155; that span reads GG.

The protein belongs to the acetylglutamate kinase family. ArgB subfamily.

The protein localises to the cytoplasm. It catalyses the reaction N-acetyl-L-glutamate + ATP = N-acetyl-L-glutamyl 5-phosphate + ADP. The protein operates within amino-acid biosynthesis; L-arginine biosynthesis; N(2)-acetyl-L-ornithine from L-glutamate: step 2/4. In terms of biological role, catalyzes the ATP-dependent phosphorylation of N-acetyl-L-glutamate. The sequence is that of Acetylglutamate kinase from Shouchella clausii (strain KSM-K16) (Alkalihalobacillus clausii).